The chain runs to 143 residues: Peptide methionine sulfoxide reductase MsrB (143 aa).

In terms of domain architecture, MsrB spans 16 to 139; that stretch reads DAELRRRLTP…NSAALNFESR (124 aa). Zn(2+)-binding residues include cysteine 55, cysteine 58, cysteine 104, and cysteine 107. Cysteine 128 (nucleophile) is an active-site residue.

This sequence belongs to the MsrB Met sulfoxide reductase family. Zn(2+) is required as a cofactor.

The catalysed reaction is L-methionyl-[protein] + [thioredoxin]-disulfide + H2O = L-methionyl-(R)-S-oxide-[protein] + [thioredoxin]-dithiol. The sequence is that of Peptide methionine sulfoxide reductase MsrB from Burkholderia ambifaria (strain ATCC BAA-244 / DSM 16087 / CCUG 44356 / LMG 19182 / AMMD) (Burkholderia cepacia (strain AMMD)).